The following is a 569-amino-acid chain: Endo-1,4-beta-xylanase 5 (569 aa).

An N-terminal signal peptide occupies residues 1–25 (MKNINNGFFLCMLLLLWCFVHSGIS). 3 N-linked (GlcNAc...) asparagine glycosylation sites follow: Asn-197, Asn-261, and Asn-307. The 292-residue stretch at 209-500 (EQTKPSFLLG…NTATGDVIDK (292 aa)) folds into the GH10 domain. Catalysis depends on Glu-332, which acts as the Proton donor. Asn-346 carries an N-linked (GlcNAc...) asparagine glycan. Glu-439 serves as the catalytic Nucleophile. N-linked (GlcNAc...) asparagine glycans are attached at residues Asn-490, Asn-536, and Asn-544.

The protein belongs to the glycosyl hydrolase 10 (cellulase F) family.

The catalysed reaction is Endohydrolysis of (1-&gt;4)-beta-D-xylosidic linkages in xylans.. It participates in glycan degradation; xylan degradation. Binds to and hydrolyzes insoluble and soluble xylan substrates. The polypeptide is Endo-1,4-beta-xylanase 5 (Arabidopsis thaliana (Mouse-ear cress)).